The sequence spans 263 residues: Phosphate import ATP-binding protein PstB (263 aa).

An ABC transporter domain is found at 17–258 (IDVRDLNFYY…PRRKETEDYI (242 aa)). 49-56 (GPSGCGKS) is a binding site for ATP.

The protein belongs to the ABC transporter superfamily. Phosphate importer (TC 3.A.1.7) family. The complex is composed of two ATP-binding proteins (PstB), two transmembrane proteins (PstC and PstA) and a solute-binding protein (PstS).

The protein localises to the cell inner membrane. It catalyses the reaction phosphate(out) + ATP + H2O = ADP + 2 phosphate(in) + H(+). Functionally, part of the ABC transporter complex PstSACB involved in phosphate import. Responsible for energy coupling to the transport system. This is Phosphate import ATP-binding protein PstB from Ralstonia nicotianae (strain ATCC BAA-1114 / GMI1000) (Ralstonia solanacearum).